Here is an 813-residue protein sequence, read N- to C-terminus: MLLLALLAFLLVSRTIARPSYSMVDDTTPEPEEPPAKYQISKADVFPVLPGEPLDLRCPLADGPLVTWTKDGAKLEVNNRTLIVRTYLQIKESTTRDSGLYACSVLKNSHFFHVNVTEASSSGDDEDDNDGSEDFTNDNNNIRAPYWTNTEKMEKKLHAVSAANTVKLRCPAREPHPSNEWLKNGKEFKQEHRIGGYKVRNQHWSLIMESVVPSDKGIYTCIVENEHGSINHTYHLDVIERSSHRPILQAGLPANTTAVVGGDAEFVCKVYSDAQPHIRWVRYIEKNGSRFGVDGLPYFKVLKAAGVNVTDEEIEVLYVRNVSFEDAGEYTCIAGNSIGISQHSAWLTVHPAPVNPLEDNPVPYYMEIGIYSTGIFIIFCMVVVCVVCRMRQGAKKKKNFTGPPVHKLTKRIPLHRQVTVSADSSSSMNSTTPLVRITTRLLNSTDAMPLANVSEYELPHDPMWEFSRDKLTLGKPLGEGCFGQVVMAEALGIDKERPKESVTVAVKMLKDNATEKDLADLVSEMEMMKMIGKHKNIINLLGACTQGGTLYVIVEYAAKGNLRQYLRARRPLEMEYSFDVTRVPDEQMTFKDLVSCTYQIARGMEYLASQKCIHRDLAARNVLVTENNVMKIADFGLARDVNNIDYYKKTSNGRLPVKWMAPEALFDRVYTHQSDVWSFGVLMWEIFTLGGSPYPGIPVEELFKLLKEGHRMDKPANCTNELYMMMRDCWHAIPSHRPTFKQLVEDLDRILTLTTNEEYLDLSAPLEQYSPSFPDSSCSASSSSGDDSVFSPDPMPHDPCLPKFQHVNGVVKT.

The signal sequence occupies residues 1 to 14 (MLLLALLAFLLVSR). Topologically, residues 18–367 (RPSYSMVDDT…EDNPVPYYME (350 aa)) are extracellular. The Ig-like C2-type 1 domain occupies 21-117 (YSMVDDTTPE…NSHFFHVNVT (97 aa)). Cysteine 58 and cysteine 103 are oxidised to a cystine. N-linked (GlcNAc...) asparagine glycosylation is found at asparagine 79 and asparagine 115. A disordered region spans residues 119 to 143 (ASSSGDDEDDNDGSEDFTNDNNNIR). The segment covering 123–136 (GDDEDDNDGSEDFT) has biased composition (acidic residues). Ig-like C2-type domains lie at 145–237 (PYWT…YHLD) and 246–348 (PILQ…AWLT). The interval 152–169 (KMEKKLHAVSAANTVKLR) is heparin-binding. Residues cysteine 170 and cysteine 221 are joined by a disulfide bond. Residues asparagine 231, asparagine 255, asparagine 287, asparagine 308, and asparagine 321 are each glycosylated (N-linked (GlcNAc...) asparagine). Cysteine 268 and cysteine 332 are oxidised to a cystine. A helical membrane pass occupies residues 368 to 388 (IGIYSTGIFIIFCMVVVCVVC). The Cytoplasmic segment spans residues 389-813 (RMRQGAKKKK…FQHVNGVVKT (425 aa)). Tyrosine 456 is modified (phosphotyrosine; by autocatalysis). A Protein kinase domain is found at 471–760 (LTLGKPLGEG…LTLTTNEEYL (290 aa)). Residues 477 to 485 (LGEGCFGQV), lysine 507, 555 to 557 (EYA), and asparagine 561 contribute to the ATP site. Tyrosine 576 carries the phosphotyrosine; by autocatalysis modification. Aspartate 616 serves as the catalytic Proton acceptor. A phosphotyrosine; by autocatalysis mark is found at tyrosine 646, tyrosine 647, and tyrosine 759. Over residues 771-792 (PSFPDSSCSASSSSGDDSVFSP) the composition is skewed to low complexity. Positions 771-801 (PSFPDSSCSASSSSGDDSVFSPDPMPHDPCL) are disordered.

This sequence belongs to the protein kinase superfamily. Tyr protein kinase family. Fibroblast growth factor receptor subfamily. As to quaternary structure, monomer. Homodimer after ligand binding. In terms of processing, autophosphorylated. Binding of FGF family members together with heparan sulfate proteoglycan or heparin promotes receptor dimerization and autophosphorylation on tyrosine residues. Autophosphorylation occurs in trans between the two FGFR molecules present in the dimer. Post-translationally, N-glycosylated in the endoplasmic reticulum. The N-glycan chains undergo further maturation to an Endo H-resistant form in the Golgi apparatus. Ubiquitinated. FGFR2 is rapidly ubiquitinated after autophosphorylation, leading to internalization and degradation. Subject to degradation both in lysosomes and by the proteasome. As to expression, expressed in the anterior neural plate in early neurula stage embryos. Later in development, the protein is also expressed in the eye anlagen, midbrain-hindbrain boundary and otic vesicle.

The protein resides in the cell membrane. The protein localises to the golgi apparatus. It is found in the cytoplasmic vesicle. It carries out the reaction L-tyrosyl-[protein] + ATP = O-phospho-L-tyrosyl-[protein] + ADP + H(+). Its activity is regulated as follows. Present in an inactive conformation in the absence of bound ligand. Ligand binding leads to dimerization and activation by autophosphorylation on tyrosine residues. In terms of biological role, tyrosine-protein kinase that acts as a cell-surface receptor for fibroblast growth factors and plays an essential role in the regulation of cell proliferation, differentiation, migration and apoptosis, and in the regulation of embryonic development. Required for normal embryonic patterning, limb bud development, lung morphogenesis, osteogenesis and skin development. Plays an essential role in the regulation of osteoblast differentiation, proliferation and apoptosis, and is required for normal skeleton development. Promotes cell proliferation in keratinocytes and immature osteoblasts, but promotes apoptosis in differentiated osteoblasts. Phosphorylates PLCG1, FRS2 and PAK4. Ligand binding leads to the activation of several signaling cascades. Activation of PLCG1 leads to the production of the cellular signaling molecules diacylglycerol and inositol 1,4,5-trisphosphate. Phosphorylation of FRS2 triggers recruitment of GRB2, GAB1, PIK3R1 and SOS1, and mediates activation of RAS, MAPK1/ERK2, MAPK3/ERK1 and the MAP kinase signaling pathway, as well as of the AKT1 signaling pathway. FGFR2 signaling is down-regulated by ubiquitination, internalization and degradation. Mutations that lead to constitutive kinase activation or impair normal FGFR2 maturation, internalization and degradation lead to aberrant signaling. Over-expressed FGFR2 promotes activation of STAT1. This is Fibroblast growth factor receptor 2 (fgfr2) from Xenopus laevis (African clawed frog).